Reading from the N-terminus, the 249-residue chain is Ribonuclease 3 (249 aa).

Positions Phe-20–Gly-149 constitute an RNase III domain. Glu-62 is a Mg(2+) binding site. Asp-66 is an active-site residue. Mg(2+) contacts are provided by Asp-135 and Glu-138. Glu-138 is a catalytic residue. In terms of domain architecture, DRBM spans Asp-175–Lys-244. The interval Arg-225–Gln-249 is disordered.

Belongs to the ribonuclease III family. Homodimer. Mg(2+) is required as a cofactor.

Its subcellular location is the cytoplasm. It catalyses the reaction Endonucleolytic cleavage to 5'-phosphomonoester.. In terms of biological role, digests double-stranded RNA. Involved in the processing of primary rRNA transcript to yield the immediate precursors to the large and small rRNAs (23S and 16S). Processes some mRNAs, and tRNAs when they are encoded in the rRNA operon. Processes pre-crRNA and tracrRNA of type II CRISPR loci if present in the organism. The polypeptide is Ribonuclease 3 (Bacillus licheniformis (strain ATCC 14580 / DSM 13 / JCM 2505 / CCUG 7422 / NBRC 12200 / NCIMB 9375 / NCTC 10341 / NRRL NRS-1264 / Gibson 46)).